The following is a 287-amino-acid chain: Casein kinase II subunit beta-1 (287 aa).

The tract at residues 1–97 (MYRDRGTVNS…ESDVSGSDGE (97 aa)) is disordered. Basic and acidic residues predominate over residues 13–25 (EVVDRKRINDALE). The segment covering 41–50 (GTVTAATTTA) has biased composition (low complexity). Over residues 78–97 (SDDESDTDSEESDVSGSDGE) the composition is skewed to acidic residues.

This sequence belongs to the casein kinase 2 subunit beta family. As to quaternary structure, heterotetramer of two catalytic alpha subunits and two regulatory beta subunits. Interacts with CCA1. Interacts with LHY. Post-translationally, phosphorylated by alpha subunit.

The protein resides in the cytoplasm. The protein localises to the cytosol. Its subcellular location is the nucleus. Its function is as follows. Plays a complex role in regulating the basal catalytic activity of the alpha subunit. The tetrameric holoenzyme CK2, composed of two alpha and two beta subunits, phosphorylates the transcription factor GBFl, resulting in stimulation of its DNA binding activity. CK2 phosphorylates the transcription factor PIF1 after an exposure to light, resulting in a proteasome-dependent degradation of PIF1 and promotion of photomorphogenesis. CK2 phosphorylates translation initiation factors. May participate in the regulation of the initiation of translation. Stimulates the binding of CCA1 to promoters. In Arabidopsis thaliana (Mouse-ear cress), this protein is Casein kinase II subunit beta-1 (CKB1).